The sequence spans 501 residues: L-arabinose isomerase (501 aa).

4 residues coordinate Mn(2+): Glu-306, Glu-333, His-350, and His-449.

Belongs to the arabinose isomerase family. Requires Mn(2+) as cofactor.

The enzyme catalyses beta-L-arabinopyranose = L-ribulose. The protein operates within carbohydrate degradation; L-arabinose degradation via L-ribulose; D-xylulose 5-phosphate from L-arabinose (bacterial route): step 1/3. Its function is as follows. Catalyzes the conversion of L-arabinose to L-ribulose. The protein is L-arabinose isomerase of Mycolicibacterium smegmatis (strain ATCC 700084 / mc(2)155) (Mycobacterium smegmatis).